Here is a 112-residue protein sequence, read N- to C-terminus: MTGKTVTRADLAESVFRKVGLSRTESAELVETVIDEICNAIVRGETVKLSSFATFQVRDKNERIGRNPKTGEEVPISPRRVMTFKASNVLKTRILKAHASRKAKARPANPAS.

This sequence belongs to the bacterial histone-like protein family. In terms of assembly, heterodimer of an alpha and a beta chain.

In terms of biological role, this protein is one of the two subunits of integration host factor, a specific DNA-binding protein that functions in genetic recombination as well as in transcriptional and translational control. The chain is Integration host factor subunit alpha from Rhizobium rhizogenes (strain K84 / ATCC BAA-868) (Agrobacterium radiobacter).